The chain runs to 739 residues: AN1-type zinc finger protein 4 (739 aa).

The 76-residue stretch at 54–129 (MELFIETLTG…LKLVLAMRGG (76 aa)) folds into the Ubiquitin-like domain. The segment covering 246 to 255 (KPKKVVKVKP) has biased composition (basic residues). Disordered regions lie at residues 246–270 (KPKK…STAA) and 287–316 (LPSG…RPVS). The segment at 673 to 720 (KKIMKHCFLCGKKTGLATSFECRCGNNFCASHRYAEAHGCTYDYKSAG) adopts an AN1-type zinc-finger fold. Residues Cys-679, Cys-682, Cys-694, Cys-696, Cys-701, His-704, His-710, and Cys-712 each coordinate Zn(2+).

This Mus musculus (Mouse) protein is AN1-type zinc finger protein 4 (Zfand4).